Reading from the N-terminus, the 246-residue chain is NLP effector protein 2 (246 aa).

The signal sequence occupies residues 1 to 19; that stretch reads MKFVVFLCAIAAVVATIQG. The Conserved undecapeptide motif I signature appears at 113–123; the sequence is AIMYSWYFPKD. Residues 130 to 136 carry the Hepta-peptide GHRHDWE motif II motif; sequence GHRHDWE.

The protein belongs to the Necrosis inducing protein (NPP1) family.

Its subcellular location is the secreted. Secreted effector that contributes strongly to virulence during infection by P.capsici. Causes large necrotic areas in both host C.annuum and non-host N.benthamiana. This is NLP effector protein 2 from Phytophthora capsici.